The sequence spans 422 residues: Glucosylglycerol-phosphate phosphatase (422 aa).

Asp-403 acts as the Proton donor in catalysis.

The protein belongs to the histidine acid phosphatase family. As to quaternary structure, monomer. Interacts with GGPS.

It carries out the reaction 2-O-(alpha-D-glucopyranosyl)-sn-glycerol 3-phosphate + H2O = 2-O-(alpha-D-glucopyranosyl)glycerol + phosphate. Phosphorylates glucosylglycerol-phosphate the precursor of the osmoprotectant glucosylglycerol necessary for salt adaptation of Synechocystis. The sequence is that of Glucosylglycerol-phosphate phosphatase (stpA) from Synechocystis sp. (strain ATCC 27184 / PCC 6803 / Kazusa).